The chain runs to 163 residues: Ribosome maturation factor RimM (163 aa).

Positions 92–162 constitute a PRC barrel domain; the sequence is EDEFYVADLV…AGRAVVRPPE (71 aa).

Belongs to the RimM family. In terms of assembly, binds ribosomal protein uS19.

Its subcellular location is the cytoplasm. Functionally, an accessory protein needed during the final step in the assembly of 30S ribosomal subunit, possibly for assembly of the head region. Essential for efficient processing of 16S rRNA. May be needed both before and after RbfA during the maturation of 16S rRNA. It has affinity for free ribosomal 30S subunits but not for 70S ribosomes. This Rubrobacter xylanophilus (strain DSM 9941 / JCM 11954 / NBRC 16129 / PRD-1) protein is Ribosome maturation factor RimM.